We begin with the raw amino-acid sequence, 548 residues long: Chaperonin GroEL (548 aa).

Residues 30–33 (TLGP), lysine 51, 87–91 (DGTTT), glycine 415, 479–481 (NAA), and aspartate 495 contribute to the ATP site. Residues 526–548 (KEDKSSDLGSAPAGGMGGMGGMM) form a disordered region. A compositionally biased stretch (gly residues) spans 537–548 (PAGGMGGMGGMM).

It belongs to the chaperonin (HSP60) family. Forms a cylinder of 14 subunits composed of two heptameric rings stacked back-to-back. Interacts with the co-chaperonin GroES.

The protein resides in the cytoplasm. The enzyme catalyses ATP + H2O + a folded polypeptide = ADP + phosphate + an unfolded polypeptide.. Functionally, together with its co-chaperonin GroES, plays an essential role in assisting protein folding. The GroEL-GroES system forms a nano-cage that allows encapsulation of the non-native substrate proteins and provides a physical environment optimized to promote and accelerate protein folding. This is Chaperonin GroEL from Buchnera aphidicola subsp. Pterocomma populeum.